Here is a 1043-residue protein sequence, read N- to C-terminus: Unconventional myosin-Ia (1043 aa).

Positions 8–694 constitute a Myosin motor domain; the sequence is VGVEDLVLLE…TLFYLEEQRR (687 aa). 101 to 108 provides a ligand contact to ATP; that stretch reads GESGAGKT. The tract at residues 571–593 is actin-binding; the sequence is VTTLMKNLYSKNPNYIRCIKPNE. 3 consecutive IQ domains span residues 697–719, 720–742, and 743–772; these read LQQLATLIQKTYRGWRCRTHYQL, MRKSQIVISSWFRGNMQKKHYRK, and MKASALLIQAFVRGWKARKNYRKYFRSGAA. The TH1 domain occupies 858-1042; sequence KASYPQSVPI…KGSRCLEVTV (185 aa).

Belongs to the TRAFAC class myosin-kinesin ATPase superfamily. Myosin family. Post-translationally, phosphorylated by ALPK1.

Functionally, involved in directing the movement of organelles along actin filaments. The protein is Unconventional myosin-Ia (MYO1A) of Bos taurus (Bovine).